The following is a 229-amino-acid chain: Platelet-activating factor acetylhydrolase IB subunit alpha2 (229 aa).

Residues Ser48, Asp193, and His196 contribute to the active site.

The protein belongs to the 'GDSL' lipolytic enzyme family. Platelet-activating factor acetylhydrolase IB beta/gamma subunits subfamily. Forms a catalytic dimer which is either homodimer (alpha2/alpha2 homodimer) or heterodimer with PAFAH1B3 (alpha2/alpha1 heterodimer). Component of the cytosolic (PAF-AH (I)) heterotetrameric enzyme, which is composed of PAFAH1B1 (beta), PAFAH1B2 (alpha2) and PAFAH1B3 (alpha1) subunits. The catalytic activity of the enzyme resides in the alpha1 (PAFAH1B3) and alpha2 (PAFAH1B2) subunits, whereas the beta subunit (PAFAH1B1) has regulatory activity. Trimer formation is not essential for the catalytic activity.

The protein resides in the cytoplasm. The catalysed reaction is a 1-O-alkyl-2-acetyl-sn-glycero-3-phosphocholine + H2O = a 1-O-alkyl-sn-glycero-3-phosphocholine + acetate + H(+). The enzyme catalyses 1-O-hexadecyl-2-acetyl-sn-glycero-3-phosphocholine + H2O = 1-O-hexadecyl-sn-glycero-3-phosphocholine + acetate + H(+). It catalyses the reaction 1-O-hexadecyl-2-acetyl-sn-glycero-3-phosphate + H2O = 1-O-hexadecyl-sn-glycero-3-phosphate + acetate + H(+). It carries out the reaction 1-O-hexadecyl-2-acetyl-sn-glycero-3-phosphoethanolamine + H2O = 1-O-hexadecyl-sn-glycero-3-phosphoethanolamine + acetate + H(+). In terms of biological role, alpha2 catalytic subunit of the cytosolic type I platelet-activating factor (PAF) acetylhydrolase (PAF-AH (I)) heterotetrameric enzyme that catalyzes the hydrolyze of the acetyl group at the sn-2 position of PAF and its analogs and modulates the action of PAF. The polypeptide is Platelet-activating factor acetylhydrolase IB subunit alpha2 (PAFAH1B2) (Gallus gallus (Chicken)).